The chain runs to 926 residues: Nitrate reductase [NADH] (926 aa).

Residues 1–85 (MAASVDRQYH…SDSEEDDDEN (85 aa)) are disordered. Over residues 36 to 46 (YTFSNPPSSNG) the composition is skewed to polar residues. Over residues 58 to 73 (DNNSNSNNGSNNNNNR) the composition is skewed to low complexity. Cys-204 lines the Mo-molybdopterin pocket. One can recognise a Cytochrome b5 heme-binding domain in the interval 551 to 626 (SKMYSMSEVK…LEDFRIGELI (76 aa)). His-586 and His-609 together coordinate heme. Positions 670-782 (RVKIPCKLIE…KGPLGHIEYL (113 aa)) constitute an FAD-binding FR-type domain. Residues 722 to 725 (RAYT), 739 to 743 (VVKVY), Phe-744, Phe-751, 756 to 758 (VMS), and Thr-809 contribute to the FAD site.

It belongs to the nitrate reductase family. In terms of assembly, homodimer. It depends on FAD as a cofactor. Heme serves as cofactor. The cofactor is Mo-molybdopterin.

The catalysed reaction is nitrite + NAD(+) + H2O = nitrate + NADH + H(+). In terms of biological role, nitrate reductase is a key enzyme involved in the first step of nitrate assimilation in plants, fungi and bacteria. The sequence is that of Nitrate reductase [NADH] (NIA) from Spinacia oleracea (Spinach).